We begin with the raw amino-acid sequence, 339 residues long: Methylthioribose-1-phosphate isomerase (339 aa).

Substrate contacts are provided by residues 52–54 (RGA), Arg89, and Gln188. The active-site Proton donor is Asp229. 239-240 (NK) is a binding site for substrate.

This sequence belongs to the eIF-2B alpha/beta/delta subunits family. MtnA subfamily.

It carries out the reaction 5-(methylsulfanyl)-alpha-D-ribose 1-phosphate = 5-(methylsulfanyl)-D-ribulose 1-phosphate. It functions in the pathway amino-acid biosynthesis; L-methionine biosynthesis via salvage pathway; L-methionine from S-methyl-5-thio-alpha-D-ribose 1-phosphate: step 1/6. Its function is as follows. Catalyzes the interconversion of methylthioribose-1-phosphate (MTR-1-P) into methylthioribulose-1-phosphate (MTRu-1-P). The protein is Methylthioribose-1-phosphate isomerase of Anaeromyxobacter sp. (strain K).